Reading from the N-terminus, the 196-residue chain is Late protein I196L (196 aa).

A run of 2 repeats spans residues 28–48 (SIYLTTAISNNISTTISPTTS) and 49–70 (SNSLTTAISNNTSTTISPTTTS). The 3; approximate repeat unit spans residues 71–92 (SNYLTSAISTNISDKEEDTPFS).

It belongs to the asfivirus I196L family.

The protein is Late protein I196L of African swine fever virus (isolate Warthog/Namibia/Wart80/1980) (ASFV).